The following is a 447-amino-acid chain: Alkylglycerol monooxygenase (447 aa).

The next 2 helical transmembrane spans lie at 43 to 63 (ATPFFIFLILLELVISWILKG) and 111 to 131 (WDSTWTWYFTFLGVDFGYYWF). Residues 119 to 249 (FTFLGVDFGY…LIIWDRIFGT (131 aa)) enclose the Fatty acid hydroxylase domain. The Histidine box-1 signature appears at 132–136 (HRMAH). The Histidine box-2 signature appears at 145–149 (HQAHH). The chain crosses the membrane as a helical span at residues 170–190 (SWVFYCPLALFIPPSVFAVHI). A Histidine box-3 motif is present at residues 221–225 (HRVHH). The next 3 membrane-spanning stretches (helical) occupy residues 340-360 (VLQFAVMLAFYEETFANTAVL), 363-383 (VTLLLRIFFFILTLTSIGFLL), and 413-433 (IPSLSFAFEIFFSVCIAFWGV).

This sequence belongs to the sterol desaturase family. TMEM195 subfamily. The cofactor is Fe cation. Highly expressed in lever and small intestine.

It localises to the endoplasmic reticulum membrane. The enzyme catalyses 1-O-(1,2-saturated-alkyl)-sn-glycerol + (6R)-L-erythro-5,6,7,8-tetrahydrobiopterin + O2 = a 1-(1-hydroxyalkyl)-sn-glycerol + (6R)-L-erythro-6,7-dihydrobiopterin + H2O. Its function is as follows. Glyceryl-ether monooxygenase that cleaves the O-alkyl bond of ether lipids. Ether lipids are essential components of brain membranes. The chain is Alkylglycerol monooxygenase (Agmo) from Mus musculus (Mouse).